A 352-amino-acid polypeptide reads, in one-letter code: fMet-Leu-Phe receptor (352 aa).

Residues 1 to 27 (MDSNASLPLNVSGGTQATPAGLVVLDV) are Extracellular-facing. 2 N-linked (GlcNAc...) asparagine glycosylation sites follow: Asn4 and Asn10. A helical transmembrane segment spans residues 28–50 (FSYLILVVTFVLGVLGNGLVIWV). Over 51–61 (TGFRMTHTVTT) the chain is Cytoplasmic. Residues 62–83 (ISYLNLALADFSFTSTLPFFIV) traverse the membrane as a helical segment. The Extracellular portion of the chain corresponds to 84 to 100 (TKALGGHWPFGWFLCKF). A disulfide bridge connects residues Cys98 and Cys178. The helical transmembrane segment at 101–121 (VFTIVDINLFGSVFLIALIAL) threads the bilayer. Residues 122 to 140 (DRCICVLHPVWAQNHRNVS) lie on the Cytoplasmic side of the membrane. The helical transmembrane segment at 141-162 (LAKKVIVGPWICALLLTLPVII) threads the bilayer. Over 163 to 207 (RVTTLSHPRAPGKMACTFDWSPWTEDPAEKLKVAISMFMVRGIIR) the chain is Extracellular. Residues 208–228 (FIIGFSTPMSIVAVCYGLIAT) traverse the membrane as a helical segment. The Cytoplasmic portion of the chain corresponds to 229 to 244 (KIHRQGLIKSSRPLRV). A helical transmembrane segment spans residues 245-268 (LSFVVASFLLCWSPYQIAALIATV). Residues 269-287 (RIRELLLGMGKDLRIVLDV) are Extracellular-facing. A helical transmembrane segment spans residues 288 to 307 (TSFVAFFNSCLNPMLYVFMG). At 308–352 (QDFRERLIHSLPASLERALSEDSAQTSDTGTNSTSAPAEAELQAI) the chain is on the cytoplasmic side.

It belongs to the G-protein coupled receptor 1 family. Phosphorylated; which is necessary for desensitization. As to expression, neutrophils.

The protein localises to the cell membrane. High affinity receptor for N-formyl-methionyl peptides (fMLP), which are powerful neutrophil chemotactic factors. Binding of fMLP to the receptor stimulates intracellular calcium mobilization and superoxide anion release. This response is mediated via a G-protein that activates a phosphatidylinositol-calcium second messenger system. Receptor for TAFA4, mediates its effects on chemoattracting macrophages, promoting phagocytosis and increasing ROS release. Receptor for cathepsin CTSG, leading to increased phagocyte chemotaxis. In Oryctolagus cuniculus (Rabbit), this protein is fMet-Leu-Phe receptor (FPR1).